The chain runs to 98 residues: MTLVHMNLLLAFAMSLTGLLMYRSHLMSALLCLEGMVLSLFILATITTLNSHFTLANMMPIILLVFAACEAAIGLALLVKISNTYGTDHVQNLNLLQC.

Helical transmembrane passes span 1–21, 26–46, and 59–79; these read MTLVHMNLLLAFAMSLTGLLM, LMSALLCLEGMVLSLFILATI, and MPIILLVFAACEAAIGLALLV.

Belongs to the complex I subunit 4L family. Core subunit of respiratory chain NADH dehydrogenase (Complex I) which is composed of 45 different subunits.

It is found in the mitochondrion inner membrane. The enzyme catalyses a ubiquinone + NADH + 5 H(+)(in) = a ubiquinol + NAD(+) + 4 H(+)(out). In terms of biological role, core subunit of the mitochondrial membrane respiratory chain NADH dehydrogenase (Complex I) which catalyzes electron transfer from NADH through the respiratory chain, using ubiquinone as an electron acceptor. Part of the enzyme membrane arm which is embedded in the lipid bilayer and involved in proton translocation. The polypeptide is NADH-ubiquinone oxidoreductase chain 4L (MT-ND4L) (Pontoporia blainvillei (Franciscana)).